Reading from the N-terminus, the 390-residue chain is Matrix metalloproteinase-23 (390 aa).

Topologically, residues 1 to 19 are cytoplasmic; sequence MGRGARVPSEAPGAGVERR. Residues 1-78 constitute a propeptide that is removed on maturation; it reads MGRGARVPSE…PGPLAPRRRR (78 aa). Residues 20–40 traverse the membrane as a helical; Signal-anchor for type II membrane protein segment; the sequence is WLGAALVALCLLPALVLLARL. The Lumenal segment spans residues 41-390; it reads GAPAVPAWSA…TYSWRVRVRG (350 aa). N-linked (GlcNAc...) asparagine glycosylation is found at asparagine 92 and asparagine 148. Residue histidine 211 coordinates Zn(2+). Glutamate 212 is a catalytic residue. Positions 215 and 221 each coordinate Zn(2+). Asparagine 232 carries an N-linked (GlcNAc...) asparagine glycan. Residues 255–289 form the ShKT domain; sequence CLDRLFVCASWARRGFCDARRRLMKRLCPSSCDFC. 3 disulfide bridges follow: cysteine 255–cysteine 289, cysteine 262–cysteine 282, and cysteine 271–cysteine 286. Residues 295–380 form the Ig-like C2-type domain; the sequence is PTVATTPPPP…VVRRQQRVLT (86 aa). N-linked (GlcNAc...) asparagine glycosylation is present at asparagine 316. A disulfide bridge connects residues cysteine 321 and cysteine 370.

The protein belongs to the peptidase M10A family. The cofactor is Zn(2+). Post-translationally, N-glycosylated. In terms of processing, proteolytic cleavage might yield an active form. In terms of tissue distribution, predominantly expressed in ovary, testis and prostate.

It is found in the endoplasmic reticulum membrane. The protein localises to the membrane. With respect to regulation, inhibited by TIMP2. Functionally, protease. May regulate the surface expression of some potassium channels by retaining them in the endoplasmic reticulum. The chain is Matrix metalloproteinase-23 (MMP23B) from Homo sapiens (Human).